We begin with the raw amino-acid sequence, 357 residues long: Ketoreductase CTB6 (357 aa).

Residue Tyr172 participates in NADP(+) binding.

Belongs to the NAD(P)-dependent epimerase/dehydratase family. Dihydroflavonol-4-reductase subfamily.

It functions in the pathway mycotoxin biosynthesis. Functionally, ketoreductase; part of the gene cluster that mediates the biosynthesis of cercosporin, a light-activated, non-host-selective toxin. The perylenequinone chromophore of cercosporin absorbs light energy to attain an electronically-activated triplet state and produces active oxygen species such as the hydroxyl radical, superoxide, hydrogen peroxide or singlet oxygen upon reaction with oxygen molecules. These reactive oxygen species cause damage to various cellular components including lipids, proteins and nucleic acids. The first step of cercosporin biosynthesis is performed by the polyketide synthase CTB1 which catalyzes the formation of nor-toralactone. The starter unit acyltransferase (SAT) domain of CTB1 initiates polyketide extension by the selective utilization of acetyl-CoA, which is elongated to the heptaketide in the beta-ketoacyl synthase (KS) domain by successive condensations with six malonyl units introduced by the malonyl acyltransferase (MAT) domain. The product template (PT) domain catalyzes C4-C9 and C2-C11 aldol cyclizations and dehydrations to a trihydroxynaphthalene, which is thought to be delivered to the thioesterase (TE) domain for product release. The bifunctional enzyme CTB3 then methylates nor-toralactone to toralactone before conducting an unusual oxidative aromatic ring opening. The O-methyltransferase CTB2 further methylates the nascent OH-6 of the CBT3 product, blocking further oxidation at this site before the reductase CTB6 reduces the 2-oxopropyl ketone at position C7, giving naphthalene. The FAD-dependent monooxygenase CTB5 in concert with the multicopper oxidase CTB12 are responsible for homodimerization of naphthalene with CTB7 installing the dioxepine moiety, finally producing cercosporin. The fasciclin domain-containing protein CTB11 might act with CTB5 and CTB12 whereas the roles of CTB9 and CTB10 have still to be elucidated. In Cercospora beticola (Sugarbeet leaf spot fungus), this protein is Ketoreductase CTB6.